A 447-amino-acid polypeptide reads, in one-letter code: 26S proteasome non-ATPase regulatory subunit 12 (447 aa).

Residues 1 to 23 (MTIGLEPAVSSKTKDKMEQDLSP) are disordered. The 172-residue stretch at 240-411 (NYIEIARCYL…GIATFTTTND (172 aa)) folds into the PCI domain.

It belongs to the proteasome subunit p55 family.

Functionally, acts as a regulatory subunit of the 26S proteasome which is involved in the ATP-dependent degradation of ubiquitinated proteins. This Dictyostelium discoideum (Social amoeba) protein is 26S proteasome non-ATPase regulatory subunit 12 (psmD12).